The following is a 130-amino-acid chain: Small ribosomal subunit protein uS8 (130 aa).

It belongs to the universal ribosomal protein uS8 family. In terms of assembly, part of the 30S ribosomal subunit. Contacts proteins S5 and S12.

One of the primary rRNA binding proteins, it binds directly to 16S rRNA central domain where it helps coordinate assembly of the platform of the 30S subunit. The sequence is that of Small ribosomal subunit protein uS8 from Coxiella burnetii (strain Dugway 5J108-111).